The following is a 760-amino-acid chain: MKIQQLIVFLFAVVLIDARTPKRYSELDIVMSTCTTFIGKYGTVCTSTGKRSTNWNCYCKTDAGFGTISDCLVRGFNNNTNIISKFTESCNMTESKFHAKYDKIQAEFKTNGTEYAKMTTKSSSGSKTSASASKSSKSTGSSNASKSSTNAHGSNSSTSSTSSSSSKSGKGNSGTSTTETITTPLLIDYKKFTPYKDAYQMSNNNFNLSINYGSGLLGYWAGILAIAIFANMIKKMFPSLTNYLSGSISNLFRKHLFLPATFRKKKAQEFSIGVYGFFDGLIPTRLETIIVVIFVVLTGLFSALHIHHVKDNPQYATKNAELGHLIADRTGILGTFLIPLLILFGGRNNFLQWLTGWDFATFIMYHRWISRVDVLLIIVHAITFSVSDKATGKYNTRMKRDFMIWGTVSTICGGFILFQAMLFFRRKCYEVFFLIHIVLVVFFVVGGYYHLESQGYGDFMWAAIAVWAFDRVVRLGRIFFFGARKATVSIKGDDTLKIEVPKPKYWKSVAGGHAFIHFLKPTLFLQSHPFTFTTTESNDKIVLYAKIKNGITSNIAKYLSPLPGNTATIRVLVEGPYGEPSSAGRNCKNVVFVAGGNGIPGIYSECVDLAKKSKNQSIKLIWIIRHWKSLSWFTEELEYLKKTNVQSTIYVTQPQDCSGLECFEHDVSFEKKSDEKDSVESSQYSLISNIKQGLSHVEFIEGRPDISTQVEQEVKQADGAIGFVTCGHPAMVDELRFAVTQNLNVSKHRVEYHEQLQTWA.

The first 18 residues, 1–18, serve as a signal peptide directing secretion; the sequence is MKIQQLIVFLFAVVLIDA. Topologically, residues 19–212 are extracellular; the sequence is RTPKRYSELD…NNNFNLSINY (194 aa). N-linked (GlcNAc...) asparagine glycosylation is found at N78, N91, N111, N143, N155, and N207. Positions 119–177 are disordered; it reads TTKSSSGSKTSASASKSSKSTGSSNASKSSTNAHGSNSSTSSTSSSSSKSGKGNSGTST. A helical transmembrane segment spans residues 213–233; that stretch reads GSGLLGYWAGILAIAIFANMI. The Cytoplasmic portion of the chain corresponds to 234–288; it reads KKMFPSLTNYLSGSISNLFRKHLFLPATFRKKKAQEFSIGVYGFFDGLIPTRLET. A helical membrane pass occupies residues 289 to 309; that stretch reads IIVVIFVVLTGLFSALHIHHV. Residues 310-324 lie on the Extracellular side of the membrane; it reads KDNPQYATKNAELGH. A helical transmembrane segment spans residues 325–345; the sequence is LIADRTGILGTFLIPLLILFG. The 116-residue stretch at 330-445 folds into the Ferric oxidoreductase domain; that stretch reads TGILGTFLIP…HIVLVVFFVV (116 aa). Residues 346–371 lie on the Cytoplasmic side of the membrane; sequence GRNNFLQWLTGWDFATFIMYHRWISR. Residues H366 and H380 each coordinate heme. A helical membrane pass occupies residues 372–392; that stretch reads VDVLLIIVHAITFSVSDKATG. Over 393–403 the chain is Extracellular; that stretch reads KYNTRMKRDFM. Residues 404–424 form a helical membrane-spanning segment; sequence IWGTVSTICGGFILFQAMLFF. Residues 425 to 430 lie on the Cytoplasmic side of the membrane; it reads RRKCYE. A helical transmembrane segment spans residues 431-451; it reads VFFLIHIVLVVFFVVGGYYHL. Heme is bound by residues H436 and H450. Residues 452–760 are Extracellular-facing; sequence ESQGYGDFMW…EYHEQLQTWA (309 aa). The region spanning 465-583 is the FAD-binding FR-type domain; that stretch reads AVWAFDRVVR…EGPYGEPSSA (119 aa). NADP(+) is bound at residue 575–578; it reads GPYG. N-linked (GlcNAc...) asparagine glycosylation occurs at N615. 726 to 727 serves as a coordination point for NADP(+); sequence CG. An N-linked (GlcNAc...) asparagine glycan is attached at N744.

Belongs to the ferric reductase (FRE) family. It depends on FAD as a cofactor. Heme serves as cofactor.

It localises to the cell membrane. It carries out the reaction 2 a Fe(II)-siderophore + NADP(+) + H(+) = 2 a Fe(III)-siderophore + NADPH. Ferric reductase responsible for reducing extracellular iron and copper prior to import. Catalyzes the reductive uptake of Fe(3+)-salts and Fe(3+) bound to catecholate or hydroxamate siderophores. Fe(3+) is reduced to Fe(2+), which then dissociates from the siderophore and can be imported by the high-affinity Fe(2+) transport complex in the plasma membrane. Also participates in Cu(2+) reduction and Cu(+) uptake. Involved in maintenance of cell wall integrity (CWI), mitochondrial function, and interaction between the pathogen and the host. This is Ferric/cupric reductase transmembrane component 1 from Candida albicans (strain SC5314 / ATCC MYA-2876) (Yeast).